A 109-amino-acid polypeptide reads, in one-letter code: Hainantoxin-XVIII-5 (109 aa).

The signal sequence occupies residues 1 to 18 (MKLSIIIIATSLVIAVVA). The propeptide occupies 19-46 (FPSKDSKAIENDKTEQRMEIVVQETARA). 4 disulfides stabilise this stretch: cysteine 47–cysteine 62, cysteine 55–cysteine 68, cysteine 59–cysteine 108, and cysteine 61–cysteine 81.

It belongs to the neurotoxin 25 family. F7 subfamily. Expressed by the venom gland.

The protein localises to the secreted. Its function is as follows. Putative ion channel inhibitor. The polypeptide is Hainantoxin-XVIII-5 (Cyriopagopus hainanus (Chinese bird spider)).